We begin with the raw amino-acid sequence, 528 residues long: O-methylsterigmatocystin oxidoreductase (528 aa).

Cys-440 serves as a coordination point for heme.

The protein belongs to the cytochrome P450 family. Requires heme as cofactor.

It carries out the reaction 8-O-methylsterigmatocystin + 2 reduced [NADPH--hemoprotein reductase] + 2 O2 = aflatoxin B1 + methanol + 2 oxidized [NADPH--hemoprotein reductase] + CO2 + H2O + 2 H(+). It catalyses the reaction 8-O-methyldihydrosterigmatocystin + 2 reduced [NADPH--hemoprotein reductase] + 2 O2 = aflatoxin B2 + methanol + 2 oxidized [NADPH--hemoprotein reductase] + CO2 + H2O + 2 H(+). Its pathway is mycotoxin biosynthesis; aflatoxin biosynthesis. Functionally, converts O-methylsterigmatocystin (OMST) to aflatoxin B1 and converts dihydro-O-methylsterigmatocystin (DHOMST) to aflatoxin B2 in the aflatoxin biosynthesis pathway. The sequence is that of O-methylsterigmatocystin oxidoreductase (ordA) from Aspergillus flavus.